Here is a 633-residue protein sequence, read N- to C-terminus: Chaperone protein HtpG (633 aa).

Residues 1-341 (MTAPHETMSF…SADLPLNVSR (341 aa)) form an a; substrate-binding region. Positions 342–562 (ELLQESRDVK…EGDMSGYLQR (221 aa)) are b. The c stretch occupies residues 563–633 (LLKQAGQKAP…YVQRVNKLLA (71 aa)).

Belongs to the heat shock protein 90 family. Homodimer.

It localises to the cytoplasm. Molecular chaperone. Has ATPase activity. The polypeptide is Chaperone protein HtpG (Cupriavidus necator (strain ATCC 17699 / DSM 428 / KCTC 22496 / NCIMB 10442 / H16 / Stanier 337) (Ralstonia eutropha)).